The following is a 763-amino-acid chain: Protein translocase subunit SecA 2 (763 aa).

ATP is bound by residues Gln-83, 101 to 105 (GEGKT), and Asp-490.

It belongs to the SecA family. As to quaternary structure, monomer and homodimer. Part of the essential Sec protein translocation apparatus which comprises SecA, SecYEG and auxiliary proteins SecDF. Other proteins may also be involved.

It is found in the cell membrane. It localises to the cytoplasm. The enzyme catalyses ATP + H2O + cellular proteinSide 1 = ADP + phosphate + cellular proteinSide 2.. Functionally, part of the Sec protein translocase complex. Interacts with the SecYEG preprotein conducting channel. Has a central role in coupling the hydrolysis of ATP to the transfer of proteins into and across the cell membrane, serving as an ATP-driven molecular motor driving the stepwise translocation of polypeptide chains across the membrane. This chain is Protein translocase subunit SecA 2, found in Corynebacterium efficiens (strain DSM 44549 / YS-314 / AJ 12310 / JCM 11189 / NBRC 100395).